The primary structure comprises 513 residues: 2-isopropylmalate synthase (513 aa).

The region spanning 4–268 (IKIFDTTLRD…ETGIKTELIY (265 aa)) is the Pyruvate carboxyltransferase domain. Mn(2+)-binding residues include Asp-13, His-203, His-205, and Asn-239. The tract at residues 392 to 513 (KLVHFHVHTG…GLLRKNGGAE (122 aa)) is regulatory domain.

It belongs to the alpha-IPM synthase/homocitrate synthase family. LeuA type 1 subfamily. Homodimer. Mn(2+) serves as cofactor.

The protein localises to the cytoplasm. The enzyme catalyses 3-methyl-2-oxobutanoate + acetyl-CoA + H2O = (2S)-2-isopropylmalate + CoA + H(+). Its pathway is amino-acid biosynthesis; L-leucine biosynthesis; L-leucine from 3-methyl-2-oxobutanoate: step 1/4. In terms of biological role, catalyzes the condensation of the acetyl group of acetyl-CoA with 3-methyl-2-oxobutanoate (2-ketoisovalerate) to form 3-carboxy-3-hydroxy-4-methylpentanoate (2-isopropylmalate). The sequence is that of 2-isopropylmalate synthase from Thermotoga maritima (strain ATCC 43589 / DSM 3109 / JCM 10099 / NBRC 100826 / MSB8).